The following is a 143-amino-acid chain: Putative nickel-responsive regulator (143 aa).

Ni(2+) is bound by residues histidine 82, histidine 97, histidine 99, and cysteine 105.

Belongs to the transcriptional regulatory CopG/NikR family. Ni(2+) serves as cofactor.

Functionally, transcriptional regulator. The protein is Putative nickel-responsive regulator of Helicobacter hepaticus (strain ATCC 51449 / 3B1).